Reading from the N-terminus, the 95-residue chain is Large ribosomal subunit protein eL37y (95 aa).

Zn(2+) contacts are provided by C19, C22, C34, and C37. The C4-type zinc-finger motif lies at C19–C37.

This sequence belongs to the eukaryotic ribosomal protein eL37 family. Zn(2+) serves as cofactor.

In terms of biological role, binds to the 23S rRNA. This is Large ribosomal subunit protein eL37y (RPL37B) from Arabidopsis thaliana (Mouse-ear cress).